The chain runs to 205 residues: Holliday junction branch migration complex subunit RuvA (205 aa).

Residues 1–64 (MIGKLRGIVD…DEAIRLIGFT (64 aa)) form a domain I region. Positions 65–143 (TDSEREWFRL…DSMGLSAALE (79 aa)) are domain II. The segment at 144–152 (VGVNGEAVS) is flexible linker. A domain III region spans residues 153-205 (SVSAPARDAVSALVNLGYPQAQAMGAVAAAAKRLDDAASTEQLIRHGLKELAR).

It belongs to the RuvA family. As to quaternary structure, homotetramer. Forms an RuvA(8)-RuvB(12)-Holliday junction (HJ) complex. HJ DNA is sandwiched between 2 RuvA tetramers; dsDNA enters through RuvA and exits via RuvB. An RuvB hexamer assembles on each DNA strand where it exits the tetramer. Each RuvB hexamer is contacted by two RuvA subunits (via domain III) on 2 adjacent RuvB subunits; this complex drives branch migration. In the full resolvosome a probable DNA-RuvA(4)-RuvB(12)-RuvC(2) complex forms which resolves the HJ.

The protein resides in the cytoplasm. Functionally, the RuvA-RuvB-RuvC complex processes Holliday junction (HJ) DNA during genetic recombination and DNA repair, while the RuvA-RuvB complex plays an important role in the rescue of blocked DNA replication forks via replication fork reversal (RFR). RuvA specifically binds to HJ cruciform DNA, conferring on it an open structure. The RuvB hexamer acts as an ATP-dependent pump, pulling dsDNA into and through the RuvAB complex. HJ branch migration allows RuvC to scan DNA until it finds its consensus sequence, where it cleaves and resolves the cruciform DNA. This is Holliday junction branch migration complex subunit RuvA from Parvibaculum lavamentivorans (strain DS-1 / DSM 13023 / NCIMB 13966).